A 514-amino-acid chain; its full sequence is GTPase-activating protein gyp1 (514 aa).

Disordered regions lie at residues 17 to 65 (LWNG…QPPK) and 130 to 164 (LPRMARSTTPNSSSRSLFPQNGVDTTTSRQKLHSS). Composition is skewed to polar residues over residues 18–28 (WNGSSSATSDP) and 135–158 (RSTTPNSSSRSLFPQNGVDTTTSR). Residues 216 to 443 (GIPSEHRPIV…RMWDTYMAEG (228 aa)) enclose the Rab-GAP TBC domain.

It is found in the golgi apparatus. It localises to the golgi stack. Its subcellular location is the cytoplasm. The protein localises to the nucleus. Its function is as follows. Stimulates specifically the GTPase activity of ypt1. Functions on the Golgi as a negative regulator of ypt1. In Schizosaccharomyces pombe (strain 972 / ATCC 24843) (Fission yeast), this protein is GTPase-activating protein gyp1.